A 404-amino-acid chain; its full sequence is Major outer membrane porin (404 aa).

The signal sequence occupies residues 1–22 (MKKLLKSVLAFAVLGSASSLHA). Positions 85–110 (GPVPTTTDTDAAADITTSTPRENPAY) are disordered. The segment covering 89–103 (TTTDTDAAADITTST) has biased composition (low complexity).

This sequence belongs to the chlamydial porin (CP) (TC 1.B.2) family. As to quaternary structure, part of a disulfide cross-linked outer membrane complex (COMC) composed of the major outer membrane porin (MOMP), the small cysteine-rich protein (OmcA) and the large cysteine-rich periplasmic protein (OmcB).

The protein resides in the cell outer membrane. In elementary bodies (EBs, the infectious stage, which is able to survive outside the host cell) provides the structural integrity of the outer envelope through disulfide cross-links with the small cysteine-rich protein and the large cysteine-rich periplasmic protein. It has been described in publications as the Sarkosyl-insoluble COMC (Chlamydia outer membrane complex), and serves as the functional equivalent of peptidoglycan. Functionally, permits diffusion of specific solutes through the outer membrane. This Chlamydia muridarum protein is Major outer membrane porin (ompA).